Reading from the N-terminus, the 105-residue chain is Cuticle protein AMP1A (105 aa).

The tract at residues 1–21 (DRDAQTLTDERSDQGDGNFRY) is disordered. Positions 16 to 81 (DGNFRYEFET…PSSDLLPVGP (66 aa)) constitute a Chitin-binding type R&amp;R domain.

Arthrodial membrane.

The chain is Cuticle protein AMP1A from Homarus americanus (American lobster).